The sequence spans 913 residues: WD repeat-containing protein 44 (913 aa).

The segment covering 1 to 14 (MASESDTEEFYDAP) has biased composition (acidic residues). A disordered region spans residues 1–24 (MASESDTEEFYDAPEDVHLGGGYP). Position 2 is an N-acetylalanine (alanine 2). The segment at 2–170 (ASESDTEEFY…SSTEQLNVLE (169 aa)) is binding activity. Residue serine 3 is modified to Phosphoserine. The FFAT-like motif signature appears at 9–15 (EFYDAPE). The residue at position 11 (tyrosine 11) is a Phosphotyrosine. Serine 27, serine 50, serine 66, serine 71, serine 81, serine 96, and serine 126 each carry phosphoserine. A coiled-coil region spans residues 119-184 (EESQKAESQN…VLNKEAVEVK (66 aa)). A phosphothreonine mark is found at threonine 158 and threonine 219. The segment at 205-348 (AVEEVAPAKP…RPRSNSGREL (144 aa)) is disordered. The tract at residues 211–257 (PAKPPRHLTPEPDIVASTKKPVPARPPPPTNFPPPRPPPPSRPAPPP) is important for interaction with ARHGAP26 AND ARHGAP10. Positions 233-256 (PARPPPPTNFPPPRPPPPSRPAPP) are enriched in pro residues. At serine 262 the chain carries Phosphoserine. The span at 262–278 (SELEFETLKTPDIDVPK) shows a compositional bias: basic and acidic residues. The residue at position 271 (threonine 271) is a Phosphothreonine. Over residues 280-311 (NITSDSLLTASMASESTVKDSQPSLDLASATS) the composition is skewed to polar residues. Residues 334 to 347 (VMGPQRPRSNSGRE) are important for interaction with RAB11A. Serine 342 and serine 344 each carry phosphoserine; by PKB/AKT1. Threonine 349 bears the Phosphothreonine mark. Disordered regions lie at residues 397–424 (SNDA…LKQK) and 459–480 (DEVF…MPYT). Serine 403, serine 470, serine 471, and serine 472 each carry phosphoserine. A compositionally biased stretch (acidic residues) spans 467-476 (DDPSSSDDEG). A Phosphotyrosine modification is found at tyrosine 479. Residues 509–548 (EHMGAVWTMKFSHCGRLLASAGQDNVVRIWALKNAFDYFN) form a WD 1 repeat. The disordered stretch occupies residues 557 to 593 (EGRVSPSPSQESLSSSKSDTDTGVCSGTDEDPDDKNA). Serine 561 and serine 565 each carry phosphoserine. Low complexity predominate over residues 561 to 573 (SPSPSQESLSSSK). 6 WD repeats span residues 605-643 (GHTA…CLCC), 645-685 (QHID…VALW), 690-729 (GQTK…YHTQ), 740-779 (KVGR…LSMK), 784-823 (VNSS…SKFT), and 876-913 (VLDA…KNVS).

Interacts with the GTP-bound form of RAB11A and RAB11B. Interacts with GRAF1/ARHGAP26 or GRAF2/ARHGAP10; the interaction connects the endoplasmic reticulum (ER) with the endosomal tubule. Interacts (via FFAT-like motif) with VAPA (via MSP domain) or VAPB (via MSP domain); the interaction connects the ER with the endosomal tubule. Does not bind to RAB7, RAB10, RAB14, RAB35 and RAB8A. Post-translationally, phosphorylated by ATK1; the phosphorylation stabilizes its interaction with RAB11A and RAB11B.

It localises to the cytoplasm. The protein localises to the cytosol. Its subcellular location is the perinuclear region. It is found in the endosome membrane. The protein resides in the golgi apparatus. It localises to the trans-Golgi network. In terms of biological role, downstream effector for Rab11 which regulates Rab11 intracellular membrane trafficking functions such as endocytic recycling, intracellular ciliogenesis and protein export. ATK1-mediated phosphorylation of WDR44 induces binding to Rab11 which activates endocytic recycling of transferrin receptor back to the plasma membrane. When bound to Rab11, prevents the formation of the ciliogenic Rab11-Rabin8/RAB3IP-RAB11FIP3 complex, therefore inhibiting preciliary trafficking and ciliogenesis. Participates in neo-synthesized protein export by connecting the endoplasmic reticulum (ER) with the endosomal tubule via direct interactions with the integral ER proteins VAPA or VAPB and the endosomal protein GRAFs (GRAF1/ARHGAP26 or GRAF2/ARHGAP10), which facilitates the transfer of proteins such as E-cadherin, MPP14 and CFTR into a Rab8-Rab10-Rab11-dependent export route. In Homo sapiens (Human), this protein is WD repeat-containing protein 44.